Reading from the N-terminus, the 116-residue chain is Glycine-rich protein 3 short isoform (116 aa).

A signal peptide spans 1–24; the sequence is MASKTLLLLGLFAFLFIVSEMAAA. The interval 27-83 is disordered; the sequence is VKSESEETVKPEQHGGGFGDNGGGRYQGGGGHGGHGGGGYQGGGGRYQGGGGRQGGG. Basic and acidic residues predominate over residues 29-39; that stretch reads SESEETVKPEQ. Over residues 40–83 the composition is skewed to gly residues; it reads HGGGFGDNGGGRYQGGGGHGGHGGGGYQGGGGRYQGGGGRQGGG. 5 consecutive repeat copies span residues 54–59, 62–67, 68–73, 75–80, and 81–86. Positions 54–86 are 5 X 6 AA tandem repeats of G-G-G-G-[HYRS]-[GYQ]; sequence GGGGHGGHGGGGYQGGGGRYQGGGGRQGGGGSY.

Belongs to the GRP family. As to quaternary structure, interacts with WAK1 (via the extracellular domain). Component of a 500 kDa complex, composed of GRP3 or GRP3-S, WAK1 and KAPP.

The protein resides in the secreted. Its subcellular location is the extracellular space. It localises to the extracellular matrix. Regulates the function of the receptor protein kinase WAK1. The protein is Glycine-rich protein 3 short isoform (GRP3S) of Arabidopsis thaliana (Mouse-ear cress).